A 315-amino-acid chain; its full sequence is 4-diphosphocytidyl-2-C-methyl-D-erythritol kinase (315 aa).

Residue K26 is part of the active site. 111–121 contributes to the ATP binding site; the sequence is PLAGGLAGGSA. Residue D153 is part of the active site.

It belongs to the GHMP kinase family. IspE subfamily.

It catalyses the reaction 4-CDP-2-C-methyl-D-erythritol + ATP = 4-CDP-2-C-methyl-D-erythritol 2-phosphate + ADP + H(+). The protein operates within isoprenoid biosynthesis; isopentenyl diphosphate biosynthesis via DXP pathway; isopentenyl diphosphate from 1-deoxy-D-xylulose 5-phosphate: step 3/6. Its function is as follows. Catalyzes the phosphorylation of the position 2 hydroxy group of 4-diphosphocytidyl-2C-methyl-D-erythritol. This Salinispora arenicola (strain CNS-205) protein is 4-diphosphocytidyl-2-C-methyl-D-erythritol kinase.